Consider the following 398-residue polypeptide: MSWLLSTMCLVHVCGNIFCLFETTTNPEAYMKVSKIVNHWGYTSEEYEAVTEDGYILPLNRIPHGKNNINSTAPKKVVLCQHGLFSTAGVWVSNPPSNSLAFILADAGFDVWMGNSRGSTWAKKHLYLDPNSKEFWAFSFDEMIKYDLPATINFILKKTGQKQIYYIGHSQGALIALGAFSTNQKLAEKIKLCFLLAPIATLKHVEGIVSLLPYFYPTAFKVVFSEKEFLSAVAFSKLHGYSCNAKVINDGCVAIFLSMTGYVPQHLNKSRVDVYIRHSLAGTSVQTLLHYRQAIKKGVFEAYDWGSQSLNMLHYNQTTPPLYNVEDMKIPTAMWSGGKDSLADTKDVAHLVPKISNLIYHKITADFSHLDFTVGKNAYYVSNDILKLLDKSETENLH.

Residues 1 to 19 (MSWLLSTMCLVHVCGNIFC) form the signal peptide. The active-site Nucleophile is the S170. Cysteines 243 and 252 form a disulfide. N268 carries an N-linked (GlcNAc...) asparagine glycan. Active-site charge relay system residues include D340 and H369.

Belongs to the AB hydrolase superfamily. Lipase family. Monomer. In terms of processing, N-glycosylated. Expressed in female lacrimal gland acinar cells from where it is secreted into tears (at protein level).

It is found in the secreted. Female-specific protein which lacks detectable lipase activity against a range of substrates. Binds the hydrophobic lipid 1-aminoanthracene with high affinity. The polypeptide is Tear acid lipase-like protein (Mesocricetus auratus (Golden hamster)).